Consider the following 151-residue polypeptide: Late embryogenesis abundant protein Lea14-A (151 aa).

Belongs to the LEA type 2 family.

The chain is Late embryogenesis abundant protein Lea14-A (LEA14-A) from Gossypium hirsutum (Upland cotton).